The chain runs to 124 residues: UPF0292 protein AF_0905 (124 aa).

A Toprim domain is found at 21 to 98 (GWVVVVEGKK…IPDVEIKRKI (78 aa)). 3 residues coordinate Mg(2+): Glu27, Asp67, and Asp69.

Belongs to the UPF0292 family. The cofactor is Mg(2+).

The protein is UPF0292 protein AF_0905 of Archaeoglobus fulgidus (strain ATCC 49558 / DSM 4304 / JCM 9628 / NBRC 100126 / VC-16).